A 299-amino-acid chain; its full sequence is tRNA dimethylallyltransferase (299 aa).

11 to 18 (GPTAVGKT) is an ATP binding site. Substrate is bound at residue 13–18 (TAVGKT). Residues 36–39 (DSQQ) are interaction with substrate tRNA.

The protein belongs to the IPP transferase family. As to quaternary structure, monomer. It depends on Mg(2+) as a cofactor.

The enzyme catalyses adenosine(37) in tRNA + dimethylallyl diphosphate = N(6)-dimethylallyladenosine(37) in tRNA + diphosphate. In terms of biological role, catalyzes the transfer of a dimethylallyl group onto the adenine at position 37 in tRNAs that read codons beginning with uridine, leading to the formation of N6-(dimethylallyl)adenosine (i(6)A). This chain is tRNA dimethylallyltransferase, found in Streptococcus pyogenes serotype M12 (strain MGAS2096).